Here is a 533-residue protein sequence, read N- to C-terminus: Histone-arginine methyltransferase CARMER (533 aa).

The 310-residue stretch at 143-452 folds into the SAM-dependent MTase PRMT-type domain; sequence ASQYFQFYGY…QSYDVTIDLH (310 aa). S-adenosyl-L-methionine-binding residues include Gln-156, Arg-165, Gly-189, Glu-211, Glu-240, and Thr-268. Arg-503 carries the post-translational modification Asymmetric dimethylarginine; by autocatalysis.

Belongs to the class I-like SAM-binding methyltransferase superfamily. Protein arginine N-methyltransferase family. As to quaternary structure, homodimer. In terms of processing, the dimethylated protein is the major form.

The protein localises to the cytoplasm. The protein resides in the nucleus. The enzyme catalyses L-arginyl-[protein] + 2 S-adenosyl-L-methionine = N(omega),N(omega)-dimethyl-L-arginyl-[protein] + 2 S-adenosyl-L-homocysteine + 2 H(+). In terms of biological role, methylates (mono- and asymmetric dimethylation) the guanidino nitrogens of arginyl residues in proteins. May methylate histone H3 at 'Arg-17' and activate transcription via chromatin remodeling. This is Histone-arginine methyltransferase CARMER (Art4) from Drosophila willistoni (Fruit fly).